We begin with the raw amino-acid sequence, 71 residues long: Large ribosomal subunit protein uL30 (71 aa).

It belongs to the universal ribosomal protein uL30 family. As to quaternary structure, part of the 50S ribosomal subunit.

The sequence is that of Large ribosomal subunit protein uL30 from Borreliella burgdorferi (strain ATCC 35210 / DSM 4680 / CIP 102532 / B31) (Borrelia burgdorferi).